Here is a 1180-residue protein sequence, read N- to C-terminus: Pesticidal crystal protein Cry4Aa (1180 aa).

It belongs to the delta endotoxin family.

Promotes colloidosmotic lysis by binding to the midgut epithelial cells of insects. The polypeptide is Pesticidal crystal protein Cry4Aa (cry4Aa) (Bacillus thuringiensis subsp. israelensis).